The following is a 375-amino-acid chain: Putative monooxygenase Rv1533 (375 aa).

FMN contacts are provided by residues Gln190, Gly195, Gly224, and Trp243–Ser246.

It belongs to the nitronate monooxygenase family. Requires FMN as cofactor.

The sequence is that of Putative monooxygenase Rv1533 from Mycobacterium tuberculosis (strain ATCC 25618 / H37Rv).